A 443-amino-acid polypeptide reads, in one-letter code: uncharacterized protein (443 aa).

4 helical membrane passes run 15–35 (IYAG…DGLA), 38–58 (LGMA…GPGS), 59–79 (AWQG…LSWL), and 181–201 (VVTA…IPAL). Residues 231-270 (NFGIGNIGNANLGNGNIGNANLGSGNAGFFNFGNGNDGNT) form a 4 X 10 AA approximate repeats region.

It belongs to the mycobacterial PPE family.

The protein resides in the cell membrane. This is an uncharacterized protein from Mycobacterium tuberculosis (strain ATCC 25618 / H37Rv).